The primary structure comprises 478 residues: Multidrug resistance outer membrane protein MdtQ (478 aa).

An N-terminal signal peptide occupies residues 1–21 (MNRDSFYPAIACFPLLLMLAG). A lipid anchor (N-palmitoyl cysteine) is attached at Cys-22. A lipid anchor (S-diacylglycerol cysteine) is attached at Cys-22.

Belongs to the outer membrane factor (OMF) (TC 1.B.17) family.

The protein resides in the cell outer membrane. Could be involved in resistance to puromycin, acriflavine and tetraphenylarsonium chloride. The protein is Multidrug resistance outer membrane protein MdtQ (mdtQ) of Escherichia coli O157:H7.